The sequence spans 80 residues: Exodeoxyribonuclease 7 small subunit (80 aa).

It belongs to the XseB family. As to quaternary structure, heterooligomer composed of large and small subunits.

Its subcellular location is the cytoplasm. It carries out the reaction Exonucleolytic cleavage in either 5'- to 3'- or 3'- to 5'-direction to yield nucleoside 5'-phosphates.. Functionally, bidirectionally degrades single-stranded DNA into large acid-insoluble oligonucleotides, which are then degraded further into small acid-soluble oligonucleotides. This chain is Exodeoxyribonuclease 7 small subunit, found in Marinomonas sp. (strain MWYL1).